The following is a 504-amino-acid chain: Probable cytochrome P450 513E1 (504 aa).

Residues M1 to N21 traverse the membrane as a helical segment. C450 contributes to the heme binding site.

Belongs to the cytochrome P450 family. Heme serves as cofactor.

Its subcellular location is the membrane. This chain is Probable cytochrome P450 513E1 (cyp513E1), found in Dictyostelium discoideum (Social amoeba).